Reading from the N-terminus, the 102-residue chain is Large ribosomal subunit protein bL21 (102 aa).

The protein belongs to the bacterial ribosomal protein bL21 family. As to quaternary structure, part of the 50S ribosomal subunit. Contacts protein L20.

Functionally, this protein binds to 23S rRNA in the presence of protein L20. This is Large ribosomal subunit protein bL21 from Ehrlichia ruminantium (strain Gardel).